A 289-amino-acid chain; its full sequence is 2-hydroxy-6-oxononadienedioate/2-hydroxy-6-oxononatrienedioate hydrolase (289 aa).

Residue His-269 is the Proton acceptor of the active site.

It belongs to the AB hydrolase superfamily. MhpC family. In terms of assembly, homodimer.

It catalyses the reaction (2Z,4E)-2-hydroxy-6-oxonona-2,4-dienedioate + H2O = (2Z)-2-hydroxypenta-2,4-dienoate + succinate + H(+). The catalysed reaction is (2Z,4E,7E)-2-hydroxy-6-oxonona-2,4,7-trienedioate + H2O = (2Z)-2-hydroxypenta-2,4-dienoate + fumarate + H(+). The protein operates within aromatic compound metabolism; 3-phenylpropanoate degradation. In terms of biological role, catalyzes the cleavage of the C5-C6 bond of 2-hydroxy-6-oxononadienedioate and 2-hydroxy-6-oxononatrienedioate, a dienol ring fission product of the bacterial meta-cleavage pathway for degradation of phenylpropionic acid. This is 2-hydroxy-6-oxononadienedioate/2-hydroxy-6-oxononatrienedioate hydrolase from Cupriavidus pinatubonensis (strain JMP 134 / LMG 1197) (Cupriavidus necator (strain JMP 134)).